A 78-amino-acid polypeptide reads, in one-letter code: D-alanyl carrier protein (78 aa).

One can recognise a Carrier domain in the interval 1-78; sequence MEFREQVLDL…KIVEALEELR (78 aa). O-(pantetheine 4'-phosphoryl)serine is present on Ser36.

The protein belongs to the DltC family. In terms of processing, 4'-phosphopantetheine is transferred from CoA to a specific serine of apo-DCP.

It is found in the cytoplasm. The protein operates within cell wall biogenesis; lipoteichoic acid biosynthesis. In terms of biological role, carrier protein involved in the D-alanylation of lipoteichoic acid (LTA). The loading of thioester-linked D-alanine onto DltC is catalyzed by D-alanine--D-alanyl carrier protein ligase DltA. The DltC-carried D-alanyl group is further transferred to cell membrane phosphatidylglycerol (PG) by forming an ester bond, probably catalyzed by DltD. D-alanylation of LTA plays an important role in modulating the properties of the cell wall in Gram-positive bacteria, influencing the net charge of the cell wall. This is D-alanyl carrier protein from Staphylococcus epidermidis (strain ATCC 35984 / DSM 28319 / BCRC 17069 / CCUG 31568 / BM 3577 / RP62A).